The chain runs to 120 residues: Piercer of microtubule wall 2 protein (120 aa).

A compositionally biased stretch (basic and acidic residues) spans 1-10 (MTECDWEKKS). Residues 1-25 (MTECDWEKKSTSASNSDTEMKPELP) form a disordered region.

It belongs to the PIERCE2 family. As to quaternary structure, microtubule inner protein component of sperm flagellar doublet microtubules. Interacts with CFAP53, ODAD1 and ODAD3; the interactions link the outer dynein arms docking complex (ODA-DC) to the internal microtubule inner proteins (MIP) in cilium axoneme. As to expression, expressed in trachea multiciliated cells.

The protein resides in the cytoplasm. The protein localises to the cytoskeleton. It localises to the cilium axoneme. Its subcellular location is the flagellum axoneme. Microtubule inner protein involved in the attachment of outer dynein arms (ODAs) to dynein-decorated doublet microtubules (DMTs) in cilia axoneme, which is required for motile cilia beating. This Bos taurus (Bovine) protein is Piercer of microtubule wall 2 protein (PIERCE2).